The primary structure comprises 273 residues: Urease accessory protein UreD (273 aa).

The protein belongs to the UreD family. As to quaternary structure, ureD, UreF and UreG form a complex that acts as a GTP-hydrolysis-dependent molecular chaperone, activating the urease apoprotein by helping to assemble the nickel containing metallocenter of UreC. The UreE protein probably delivers the nickel.

It localises to the cytoplasm. Functionally, required for maturation of urease via the functional incorporation of the urease nickel metallocenter. The sequence is that of Urease accessory protein UreD from Rhizobium rhizogenes (strain K84 / ATCC BAA-868) (Agrobacterium radiobacter).